A 312-amino-acid polypeptide reads, in one-letter code: Protein-methionine-sulfoxide reductase catalytic subunit MsrP (312 aa).

The tat-type signal signal peptide spans 1–45; that stretch reads MPVYRPPRIAASEITPERFFLDRRSFLAAAGGLVLGGTGMAHAAA. Mo-molybdopterin is bound by residues N69, 72–73, C126, T161, N211, R216, and 227–229; these read YE and GIK.

The protein belongs to the MsrP family. In terms of assembly, heterodimer of a catalytic subunit (MsrP) and a heme-binding subunit (MsrQ). It depends on Mo-molybdopterin as a cofactor. Predicted to be exported by the Tat system. The position of the signal peptide cleavage has not been experimentally proven.

It is found in the periplasm. It carries out the reaction L-methionyl-[protein] + a quinone + H2O = L-methionyl-(S)-S-oxide-[protein] + a quinol. The catalysed reaction is L-methionyl-[protein] + a quinone + H2O = L-methionyl-(R)-S-oxide-[protein] + a quinol. Its function is as follows. Part of the MsrPQ system that repairs oxidized periplasmic proteins containing methionine sulfoxide residues (Met-O), using respiratory chain electrons. Thus protects these proteins from oxidative-stress damage caused by reactive species of oxygen and chlorine generated by the host defense mechanisms. MsrPQ is essential for the maintenance of envelope integrity under bleach stress, rescuing a wide series of structurally unrelated periplasmic proteins from methionine oxidation. The catalytic subunit MsrP is non-stereospecific, being able to reduce both (R-) and (S-) diastereoisomers of methionine sulfoxide. The sequence is that of Protein-methionine-sulfoxide reductase catalytic subunit MsrP from Sinorhizobium fredii (strain NBRC 101917 / NGR234).